We begin with the raw amino-acid sequence, 368 residues long: Protein-glutamate methylesterase/protein-glutamine glutaminase (368 aa).

Residues 9-126 form the Response regulatory domain; it reads KVLVVDDSAF…SINMKELKDE (118 aa). Asp-60 carries the post-translational modification 4-aspartylphosphate. The region spanning 161-354 is the CheB-type methylesterase domain; sequence SVPARIAVAI…ETVVKAVEII (194 aa). Residues Ser-173, His-200, and Asp-296 contribute to the active site.

Belongs to the CheB family. Phosphorylated by CheA. Phosphorylation of the N-terminal regulatory domain activates the methylesterase activity.

The protein resides in the cytoplasm. The catalysed reaction is [protein]-L-glutamate 5-O-methyl ester + H2O = L-glutamyl-[protein] + methanol + H(+). It carries out the reaction L-glutaminyl-[protein] + H2O = L-glutamyl-[protein] + NH4(+). Involved in chemotaxis. Part of a chemotaxis signal transduction system that modulates chemotaxis in response to various stimuli. Catalyzes the demethylation of specific methylglutamate residues introduced into the chemoreceptors (methyl-accepting chemotaxis proteins or MCP) by CheR. Also mediates the irreversible deamidation of specific glutamine residues to glutamic acid. This chain is Protein-glutamate methylesterase/protein-glutamine glutaminase, found in Pyrococcus horikoshii (strain ATCC 700860 / DSM 12428 / JCM 9974 / NBRC 100139 / OT-3).